The primary structure comprises 240 residues: Ribonuclease HII (240 aa).

The 192-residue stretch at 29-220 folds into the RNase H type-2 domain; it reads EPIAGVDEAG…VRRAAGLEPL (192 aa). Residues D35, E36, and D129 each coordinate a divalent metal cation.

The protein belongs to the RNase HII family. The cofactor is Mn(2+). Mg(2+) is required as a cofactor.

Its subcellular location is the cytoplasm. The catalysed reaction is Endonucleolytic cleavage to 5'-phosphomonoester.. Functionally, endonuclease that specifically degrades the RNA of RNA-DNA hybrids. This chain is Ribonuclease HII, found in Nocardioides sp. (strain ATCC BAA-499 / JS614).